A 936-amino-acid chain; its full sequence is Lon protease homolog, mitochondrial (936 aa).

A mitochondrion-targeting transit peptide spans 1-40; sequence MYATRAIARRLERHAARCKGAHVARAVRGARARTTSAPRA. The tract at residues 65-95 is disordered; sequence AFVSSVDGDGSTGSTGSSSSSSSSAFGDSAS. A compositionally biased stretch (low complexity) spans 66-95; sequence FVSSVDGDGSTGSTGSSSSSSSSAFGDSAS. One can recognise a Lon N-terminal domain in the interval 112–352; it reads VLAVPLPRRP…ATLELLKKEV (241 aa). 507–514 is a binding site for ATP; sequence GPPGVGKT. Residues 748-932 enclose the Lon proteolytic domain; that stretch reads VTPPGVVTGL…DEVYRQALDW (185 aa). Catalysis depends on residues S838 and K881.

Belongs to the peptidase S16 family. Homohexamer or homoheptamer. Organized in a ring with a central cavity.

The protein localises to the mitochondrion matrix. The enzyme catalyses Hydrolysis of proteins in presence of ATP.. Its function is as follows. ATP-dependent serine protease that mediates the selective degradation of misfolded, unassembled or oxidatively damaged polypeptides as well as certain short-lived regulatory proteins in the mitochondrial matrix. May also have a chaperone function in the assembly of inner membrane protein complexes. Participates in the regulation of mitochondrial gene expression and in the maintenance of the integrity of the mitochondrial genome. Binds to mitochondrial DNA in a site-specific manner. The protein is Lon protease homolog, mitochondrial of Ostreococcus lucimarinus (strain CCE9901).